We begin with the raw amino-acid sequence, 99 residues long: Large ribosomal subunit protein bL21 (99 aa).

It belongs to the bacterial ribosomal protein bL21 family. As to quaternary structure, part of the 50S ribosomal subunit. Contacts protein L20.

In terms of biological role, this protein binds to 23S rRNA in the presence of protein L20. In Acholeplasma laidlawii (strain PG-8A), this protein is Large ribosomal subunit protein bL21.